The following is a 504-amino-acid chain: Cytochrome P450 3A1 (504 aa).

Cys443 lines the heme pocket.

Belongs to the cytochrome P450 family. The cofactor is heme.

The protein resides in the endoplasmic reticulum membrane. It is found in the microsome membrane. It catalyses the reaction an organic molecule + reduced [NADPH--hemoprotein reductase] + O2 = an alcohol + oxidized [NADPH--hemoprotein reductase] + H2O + H(+). Its function is as follows. Cytochromes P450 are a group of heme-thiolate monooxygenases. In liver microsomes, this enzyme is involved in an NADPH-dependent electron transport pathway. It oxidizes a variety of structurally unrelated compounds, including steroids, fatty acids, and xenobiotics. The protein is Cytochrome P450 3A1 (Cyp3a1) of Rattus norvegicus (Rat).